The primary structure comprises 503 residues: MALRAKAEVCMAVPWLSLQRAQALGTRAARVPRTVLPFEAMPRRPGNRWLRLLQIWREQGYEDLHLEVHQTFQELGPIFRYDLGGAGMVCVMLPEDVEKLQQVDSLHPHRMSLEPWVAYRQHRGHKCGVFLLNGPEWRFNRLRLNPEVLSPNAVQRFLPMVDAVARDFSQALKKKVLQNARGSLTLDVQPSIFHYTIEASNLALFGERLGLVGHSPSSASLNFLHALEVMFKSTVQLMFMPRSLSRWTSPKVWKEHFEAWDCIFQYGDNCIQKIYQELAFSRPQQYTSIVAELLLNAELSPDAIKANSMELTAGSVDTTVFPLLMTLFELARNPNVQQALRQESLAAAASISEHPQKATTELPLLRAALKETLRLYPVGLFLERVASSDLVLQNYHIPAGTLVRVFLYSLGRNPALFPRPERYNPQRWLDIRGSGRNFYHVPFGFGMRQCLGRRLAEAEMLLLLHHVLKHLQVETLTQEDIKMVYSFILRPSMFPLLTFRAIN.

The N-terminal 24 residues, Met1–Leu24, are a transit peptide targeting the mitochondrion. Cys450 contacts heme.

Belongs to the cytochrome P450 family. Heme is required as a cofactor. Expressed in the zona fasciculata/reticularis of the adrenal cortex.

The protein resides in the mitochondrion inner membrane. The catalysed reaction is a steroid + 2 reduced [adrenodoxin] + O2 + 2 H(+) = an 11beta-hydroxysteroid + 2 oxidized [adrenodoxin] + H2O. It carries out the reaction 11-deoxycortisol + 2 reduced [adrenodoxin] + O2 + 2 H(+) = cortisol + 2 oxidized [adrenodoxin] + H2O. It catalyses the reaction 21-hydroxyprogesterone + 2 reduced [adrenodoxin] + O2 + 2 H(+) = corticosterone + 2 oxidized [adrenodoxin] + H2O. It functions in the pathway steroid biosynthesis; glucocorticoid biosynthesis. The protein operates within steroid hormone biosynthesis. Its function is as follows. A cytochrome P450 monooxygenase involved in the biosynthesis of adrenal corticoids. Catalyzes a variety of reactions that are essential for many species, including detoxification, defense, and the formation of endogenous chemicals like steroid hormones. Steroid 11beta, 18- and 19-hydroxylase with preferred regioselectivity at 11beta, then 18, and lastly 19. Catalyzes the hydroxylation of 11-deoxycortisol and 11-deoxycorticosterone (21-hydroxyprogesterone) at 11beta position, yielding cortisol or corticosterone, respectively, but cannot produce aldosterone. Mechanistically, uses molecular oxygen inserting one oxygen atom into a substrate for hydroxylation and reducing the second into a water molecule. Two electrons are provided by NADPH via a two-protein mitochondrial transfer system comprising flavoprotein FDXR (adrenodoxin/ferredoxin reductase) and nonheme iron-sulfur protein FDX1 or FDX2 (adrenodoxin/ferredoxin). Due to its lack of 18-oxidation activity, it is incapable of generating aldosterone. Could also be involved in the androgen metabolic pathway. This Homo sapiens (Human) protein is Cytochrome P450 11B1, mitochondrial.